A 392-amino-acid chain; its full sequence is 1-deoxy-D-xylulose 5-phosphate reductoisomerase (392 aa).

Thr10, Gly11, Ser12, Ile13, Arg37, Gln38, and Asn124 together coordinate NADPH. Residue Lys125 coordinates 1-deoxy-D-xylulose 5-phosphate. Glu126 is an NADPH binding site. Asp150 contributes to the Mn(2+) binding site. 4 residues coordinate 1-deoxy-D-xylulose 5-phosphate: Ser151, Glu152, Ser179, and His202. Position 152 (Glu152) interacts with Mn(2+). Gly208 lines the NADPH pocket. 4 residues coordinate 1-deoxy-D-xylulose 5-phosphate: Ser215, Asn220, Lys221, and Glu224. Glu224 is a Mn(2+) binding site.

This sequence belongs to the DXR family. Mg(2+) serves as cofactor. It depends on Mn(2+) as a cofactor.

It carries out the reaction 2-C-methyl-D-erythritol 4-phosphate + NADP(+) = 1-deoxy-D-xylulose 5-phosphate + NADPH + H(+). It functions in the pathway isoprenoid biosynthesis; isopentenyl diphosphate biosynthesis via DXP pathway; isopentenyl diphosphate from 1-deoxy-D-xylulose 5-phosphate: step 1/6. Its function is as follows. Catalyzes the NADPH-dependent rearrangement and reduction of 1-deoxy-D-xylulose-5-phosphate (DXP) to 2-C-methyl-D-erythritol 4-phosphate (MEP). The chain is 1-deoxy-D-xylulose 5-phosphate reductoisomerase from Cupriavidus metallidurans (strain ATCC 43123 / DSM 2839 / NBRC 102507 / CH34) (Ralstonia metallidurans).